The following is a 373-amino-acid chain: 4-hydroxy-3-methylbut-2-en-1-yl diphosphate synthase (flavodoxin) (373 aa).

[4Fe-4S] cluster is bound by residues C268, C271, C303, and E310.

This sequence belongs to the IspG family. Requires [4Fe-4S] cluster as cofactor.

The enzyme catalyses (2E)-4-hydroxy-3-methylbut-2-enyl diphosphate + oxidized [flavodoxin] + H2O + 2 H(+) = 2-C-methyl-D-erythritol 2,4-cyclic diphosphate + reduced [flavodoxin]. It participates in isoprenoid biosynthesis; isopentenyl diphosphate biosynthesis via DXP pathway; isopentenyl diphosphate from 1-deoxy-D-xylulose 5-phosphate: step 5/6. Its function is as follows. Converts 2C-methyl-D-erythritol 2,4-cyclodiphosphate (ME-2,4cPP) into 1-hydroxy-2-methyl-2-(E)-butenyl 4-diphosphate. This Exiguobacterium sp. (strain ATCC BAA-1283 / AT1b) protein is 4-hydroxy-3-methylbut-2-en-1-yl diphosphate synthase (flavodoxin).